The sequence spans 474 residues: Catalase (474 aa).

Residues His-52 and Asn-124 contribute to the active site. Tyr-334 is a heme binding site.

Belongs to the catalase family. Heme is required as a cofactor.

It carries out the reaction 2 H2O2 = O2 + 2 H2O. Functionally, decomposes hydrogen peroxide into water and oxygen; serves to protect cells from the toxic effects of hydrogen peroxide. This chain is Catalase (katA), found in Campylobacter jejuni subsp. jejuni serotype O:2 (strain ATCC 700819 / NCTC 11168).